The primary structure comprises 546 residues: MADAAMSGEEKEEDGGKRTTAATPAETLGFYEPSDGSRVETKKRSLSDLSLLRFISAELTRGYFLENNEAKYKERREKVYTCLRIPRELEKLMVFGFFLCLDAFLYVFTLLPLRVLLALIRFLTLPCCGLSDGRVLQPAQVCDVLKGVILVICYFIMHYVDYSMMYHLIRGQSVIKLYIIYNMLEVADRLFSSFGQDILDALYWTATEPKERKRAHLGVIPHFFMAVLYVILHAILILVQATTLNVAFNSHNKSLLTIMMSNNFVEIKGSVFKKFEKNNLFQMSNSDIKERFTNYVLLLIVCLRNMEQFSWNPDHLWVLFPDVCMVIASEIAVDVVKHAFITKFNDITADVYSEYRASLAFELVSSRQKNACTDYSDSVSRRMGFIPLPLAVLLIRVVTSSVKVQGILAYSCVVLFYFGLITLKVLNSIVLLGKSCQYIKDANMEEKLFQPPTCQPGKTPKKAQNKSKPNQGHPPDETANTSVTSQPTKAASTAQLLVESNSDKLLTTPDAEEKDISGDNSELKQKQADKDLLDIDRFTICGNRID.

Positions 1-37 (MADAAMSGEEKEEDGGKRTTAATPAETLGFYEPSDGS) are disordered. Transmembrane regions (helical) follow at residues 92 to 112 (LMVFGFFLCLDAFLYVFTLLP), 149 to 169 (ILVICYFIMHYVDYSMMYHLI), 219 to 239 (VIPHFFMAVLYVILHAILILV), 316 to 336 (LWVLFPDVCMVIASEIAVDVV), 384 to 404 (GFIPLPLAVLLIRVVTSSVKV), and 413 to 433 (VVLFYFGLITLKVLNSIVLLG). The segment at 449–529 (FQPPTCQPGK…NSELKQKQAD (81 aa)) is disordered. Polar residues predominate over residues 478 to 505 (TANTSVTSQPTKAASTAQLLVESNSDKL). Basic and acidic residues predominate over residues 514–529 (KDISGDNSELKQKQAD).

It belongs to the TAPT1 family.

It is found in the cytoplasm. The protein resides in the cytoskeleton. Its subcellular location is the microtubule organizing center. The protein localises to the centrosome. It localises to the cilium basal body. It is found in the membrane. Plays a role in primary cilia formation. Involved in cartilage and bone development. May play a role in the differentiation of cranial neural crest cells. May act as a downstream effector of hoxc8 during development. The sequence is that of Transmembrane anterior posterior transformation protein 1 homolog (tapt1) from Xenopus laevis (African clawed frog).